The following is a 172-amino-acid chain: Cytidylate kinase (172 aa).

ATP is bound at residue 4-12; sequence GPPGSGKST.

Belongs to the cytidylate kinase family. Type 2 subfamily.

Its subcellular location is the cytoplasm. It catalyses the reaction CMP + ATP = CDP + ADP. It carries out the reaction dCMP + ATP = dCDP + ADP. The protein is Cytidylate kinase (cmk) of Aeropyrum pernix (strain ATCC 700893 / DSM 11879 / JCM 9820 / NBRC 100138 / K1).